Reading from the N-terminus, the 352-residue chain is 2'-dehydrokanamycin reductase (352 aa).

It belongs to the NAD(P)-dependent epimerase/dehydratase family.

The catalysed reaction is 2'-dehydrokanamycin A + NADPH + H(+) = kanamycin A + NADP(+). It participates in antibiotic biosynthesis; kanamycin biosynthesis. Mediates the conversion of 2'-dehydrokanamycin A into kanamycin A. In Streptomyces kanamyceticus, this protein is 2'-dehydrokanamycin reductase (kanK).